The primary structure comprises 354 residues: D-alanine--D-alanine ligase (354 aa).

The region spanning 140–344 (KRLLRDSGLS…ISTLLTRLIM (205 aa)) is the ATP-grasp domain. 170–225 (ADMFGLPFFVKPVNQGSSIGVAKVNDDYSFHSALDIAFFYSHKIIIESCIAGRELE) provides a ligand contact to ATP. The Mg(2+) site is built by aspartate 298, glutamate 311, and asparagine 313.

This sequence belongs to the D-alanine--D-alanine ligase family. Requires Mg(2+) as cofactor. Mn(2+) serves as cofactor.

It localises to the cytoplasm. The enzyme catalyses 2 D-alanine + ATP = D-alanyl-D-alanine + ADP + phosphate + H(+). It functions in the pathway cell wall biogenesis; peptidoglycan biosynthesis. In terms of biological role, cell wall formation. This is D-alanine--D-alanine ligase from Blochmanniella floridana.